The sequence spans 76 residues: Ovarian cancer-related protein 1 (76 aa).

The sequence is that of Ovarian cancer-related protein 1 (OCR1) from Homo sapiens (Human).